We begin with the raw amino-acid sequence, 111 residues long: Disintegrin subunit alpha (111 aa).

Positions 1–20 are cleaved as a signal peptide; that stretch reads MIQVLLVTICLAVFPYQGSS. The propeptide occupies 21 to 44; sequence IILESGNVNDYEVVYPRKITPLPK. Positions 45 to 111 constitute a Disintegrin domain; it reads GAVQPKNPCC…GDCPRKHFYA (67 aa). Intrachain disulfides connect Cys-53/Cys-76, Cys-67/Cys-73, Cys-72/Cys-97, and Cys-85/Cys-104. The Cell attachment site signature appears at 89–91; that stretch reads RGD. Positions 110-111 are excised as a propeptide; the sequence is YA.

Belongs to the disintegrin family. Dimeric disintegrin subfamily. Heterodimer with subunit beta; disulfide-linked. Expressed by the venom gland.

It is found in the secreted. Its function is as follows. Acts by binding to alpha-IIb/beta-3 (ITGA2B/ITGB3) on the platelet surface and inhibits both ADP-induced platelet aggregation and platelet aggregate dissociation in human platelet-rich plasma. This Agkistrodon piscivorus leucostoma (Western cottonmouth) protein is Disintegrin subunit alpha.